Reading from the N-terminus, the 388-residue chain is Putative nickel insertion protein (388 aa).

The protein belongs to the LarC family.

The protein is Putative nickel insertion protein of Geobacter sulfurreducens (strain ATCC 51573 / DSM 12127 / PCA).